The chain runs to 443 residues: Ribulose bisphosphate carboxylase large chain (443 aa).

Lys-7 carries the post-translational modification N6,N6,N6-trimethyllysine. Residues Asn-116 and Thr-166 each contribute to the substrate site. Lys-168 functions as the Proton acceptor in the catalytic mechanism. Lys-170 is a binding site for substrate. 3 residues coordinate Mg(2+): Lys-194, Asp-196, and Glu-197. An N6-carboxylysine modification is found at Lys-194. His-287 functions as the Proton acceptor in the catalytic mechanism. Positions 288, 320, and 372 each coordinate substrate.

Belongs to the RuBisCO large chain family. Type I subfamily. In terms of assembly, heterohexadecamer of 8 large chains and 8 small chains; disulfide-linked. The disulfide link is formed within the large subunit homodimers. It depends on Mg(2+) as a cofactor. In terms of processing, the disulfide bond which can form in the large chain dimeric partners within the hexadecamer appears to be associated with oxidative stress and protein turnover.

Its subcellular location is the plastid. It localises to the chloroplast. The enzyme catalyses 2 (2R)-3-phosphoglycerate + 2 H(+) = D-ribulose 1,5-bisphosphate + CO2 + H2O. It carries out the reaction D-ribulose 1,5-bisphosphate + O2 = 2-phosphoglycolate + (2R)-3-phosphoglycerate + 2 H(+). In terms of biological role, ruBisCO catalyzes two reactions: the carboxylation of D-ribulose 1,5-bisphosphate, the primary event in carbon dioxide fixation, as well as the oxidative fragmentation of the pentose substrate in the photorespiration process. Both reactions occur simultaneously and in competition at the same active site. This is Ribulose bisphosphate carboxylase large chain from Abies sachalinensis (Sakhalin fir).